A 311-amino-acid polypeptide reads, in one-letter code: Putative UPF0607 protein ENSP00000382826 (311 aa).

A compositionally biased stretch (basic and acidic residues) spans 48-61 (AEEPKEATEVKDQV). Disordered regions lie at residues 48 to 99 (AEEP…WYNP), 186 to 229 (GLLM…PLQL), and 291 to 311 (RKQL…GSCL). Residues 78 to 97 (EAASTSRPLETQGNLTSSWY) are compositionally biased toward polar residues. Composition is skewed to basic residues over residues 213–222 (AGHRSRKRKL) and 291–305 (RKQL…RQGR).

Belongs to the UPF0607 family.

This is Putative UPF0607 protein ENSP00000382826 from Homo sapiens (Human).